Consider the following 100-residue polypeptide: RxLR effector protein PITG_18683 (100 aa).

Positions 1–22 (MRSFLYGILAFAVLARSSAVAA) are cleaved as a signal peptide. The short motif at 43–57 (RSLRVEAQEVIQSGR) is the RxLR-dEER element. Residues 78–82 (KPDIK) carry the Calmodulin-binding motif motif.

The protein belongs to the RxLR effector family. Interacts with the host calmodulin.

It localises to the secreted. The protein resides in the host cell. In terms of biological role, secreted effector that associates with calmodulin to interfere with plant defense-associated calcium signaling in hosts. The polypeptide is RxLR effector protein PITG_18683 (Phytophthora infestans (strain T30-4) (Potato late blight agent)).